The primary structure comprises 409 residues: tRNA(Met) cytidine acetate ligase (409 aa).

Residues 7–20 (VVEY…HLYH), Gly102, Asn169, and Arg194 each bind ATP.

The protein belongs to the TmcAL family.

The protein resides in the cytoplasm. The enzyme catalyses cytidine(34) in elongator tRNA(Met) + acetate + ATP = N(4)-acetylcytidine(34) in elongator tRNA(Met) + AMP + diphosphate. In terms of biological role, catalyzes the formation of N(4)-acetylcytidine (ac(4)C) at the wobble position of elongator tRNA(Met), using acetate and ATP as substrates. First activates an acetate ion to form acetyladenylate (Ac-AMP) and then transfers the acetyl group to tRNA to form ac(4)C34. The sequence is that of tRNA(Met) cytidine acetate ligase from Clostridium botulinum (strain Langeland / NCTC 10281 / Type F).